Reading from the N-terminus, the 402-residue chain is Multidrug resistance protein MdtH (402 aa).

11 helical membrane passes run 13–33, 34–54, 99–116, 139–159, 165–185, 214–234, 243–263, 277–297, 300–320, 340–360, and 368–388; these read YFLL…FPLI, SIRF…ALGL, PWLL…GTLF, LLMM…SWLL, LVCA…AWLL, VLTL…LPIM, AAVK…LYPI, LMAG…VSSV, LFVL…ARET, LGLA…FDSG, and LPWV…WWQF.

Belongs to the major facilitator superfamily. DHA1 family. MdtH (TC 2.A.1.2.21) subfamily.

The protein resides in the cell inner membrane. This Enterobacter sp. (strain 638) protein is Multidrug resistance protein MdtH.